Reading from the N-terminus, the 165-residue chain is Crossover junction endodeoxyribonuclease RuvC (165 aa).

Active-site residues include D8, E69, and H141. Mg(2+)-binding residues include D8, E69, and H141.

Belongs to the RuvC family. Homodimer which binds Holliday junction (HJ) DNA. The HJ becomes 2-fold symmetrical on binding to RuvC with unstacked arms; it has a different conformation from HJ DNA in complex with RuvA. In the full resolvosome a probable DNA-RuvA(4)-RuvB(12)-RuvC(2) complex forms which resolves the HJ. The cofactor is Mg(2+).

It localises to the cytoplasm. The enzyme catalyses Endonucleolytic cleavage at a junction such as a reciprocal single-stranded crossover between two homologous DNA duplexes (Holliday junction).. Functionally, the RuvA-RuvB-RuvC complex processes Holliday junction (HJ) DNA during genetic recombination and DNA repair. Endonuclease that resolves HJ intermediates. Cleaves cruciform DNA by making single-stranded nicks across the HJ at symmetrical positions within the homologous arms, yielding a 5'-phosphate and a 3'-hydroxyl group; requires a central core of homology in the junction. The consensus cleavage sequence is 5'-(A/T)TT(C/G)-3'. Cleavage occurs on the 3'-side of the TT dinucleotide at the point of strand exchange. HJ branch migration catalyzed by RuvA-RuvB allows RuvC to scan DNA until it finds its consensus sequence, where it cleaves and resolves the cruciform DNA. The sequence is that of Crossover junction endodeoxyribonuclease RuvC from Wolbachia pipientis subsp. Culex pipiens (strain wPip).